Consider the following 314-residue polypeptide: Bis(5'-nucleosyl)-tetraphosphatase, symmetrical (314 aa).

The interval 267–314 (QVPGNPITHPPKTAQRPRQPRRRQRQRGGDQAQTGPAPTPASTGPAGG) is disordered. Over residues 297 to 314 (QAQTGPAPTPASTGPAGG) the composition is skewed to low complexity.

Belongs to the Ap4A hydrolase family.

It catalyses the reaction P(1),P(4)-bis(5'-adenosyl) tetraphosphate + H2O = 2 ADP + 2 H(+). Hydrolyzes diadenosine 5',5'''-P1,P4-tetraphosphate to yield ADP. The chain is Bis(5'-nucleosyl)-tetraphosphatase, symmetrical from Xanthomonas axonopodis pv. citri (strain 306).